The chain runs to 162 residues: Caveolin-2 (162 aa).

At Met1–Lys86 the chain is on the cytoplasmic side. Residue Tyr19 is modified to Phosphotyrosine; by SRC. A phosphoserine mark is found at Ser20 and Ser23. At Tyr27 the chain carries Phosphotyrosine; by SRC. Positions Phe87–Leu107 form an intramembrane region, helical. The Cytoplasmic segment spans residues Ser108–Asp162.

The protein belongs to the caveolin family. In terms of assembly, monomer or homodimer. Interacts with CAV1; the interaction forms a stable heterooligomeric complex that is required for targeting to lipid rafts and for caveolae formation. Tyrosine phosphorylated forms do not form heterooligomers with the Tyr-19-phosphorylated form existing as a monomer or dimer, and the Tyr-27-form as a monomer only. Interacts (tyrosine phosphorylated form) with the SH2 domain-containing proteins, RASA1, NCK1 and SRC. Interacts (tyrosine phosphorylated form) with INSR, the interaction (Tyr-27-phosphorylated form) is increased on insulin stimulation. Interacts (Tyr-19 phosphorylated form) with MAPK1 (phosphorylated form); the interaction, promoted by insulin, leads to nuclear location and MAPK1 activation. Interacts with STAT3; the interaction is increased on insulin-induced tyrosine phosphorylation leading to STAT activation. In terms of processing, phosphorylated on serine and tyrosine residues. CAV1 promotes phosphorylation on Ser-23 which then targets the complex to the plasma membrane, lipid rafts and caveolae. Phosphorylation on both Tyr-19 and Tyr-27 is required for insulin-induced 'Ser-727' phosphorylation of STAT3 and its activation. Phosphorylation on Tyr-19 is required for insulin-induced phosphorylation of MAPK1 and DNA binding of STAT3. Tyrosine phosphorylation is induced by both EGF and insulin.

The protein localises to the nucleus. It is found in the cytoplasm. It localises to the golgi apparatus membrane. Its subcellular location is the cell membrane. The protein resides in the membrane. The protein localises to the caveola. Its function is as follows. May act as a scaffolding protein within caveolar membranes. Interacts directly with G-protein alpha subunits and can functionally regulate their activity. Acts as an accessory protein in conjunction with CAV1 in targeting to lipid rafts and driving caveolae formation. Positive regulator of cellular mitogenesis of the MAPK signaling pathway. Required for the insulin-stimulated nuclear translocation and activation of MAPK1 and STAT3, and the subsequent regulation of cell cycle progression. The protein is Caveolin-2 (CAV2) of Rhinolophus ferrumequinum (Greater horseshoe bat).